The sequence spans 183 residues: Transmembrane protein 154 (183 aa).

Residues 1–22 (MQAPRAALVFALVIALVPVGRG) form the signal peptide. At 23–75 (NYEELENSGDTTVESERPNKVTIPSTFAAVTIKETLNANINSTNFAPDENQLE) the chain is on the extracellular side. A helical membrane pass occupies residues 76-96 (FILMVLIPLILLVLLLLSVVF). The Cytoplasmic segment spans residues 97–183 (LATYYKRKRT…SNHNPSDSES (87 aa)). The disordered stretch occupies residues 163 to 183 (ECLPTLKEEKESNHNPSDSES). Residue S179 is modified to Phosphoserine.

The protein localises to the membrane. This chain is Transmembrane protein 154 (TMEM154), found in Homo sapiens (Human).